A 350-amino-acid chain; its full sequence is Neutral protease 2 homolog SNOG_10522 (350 aa).

The first 18 residues, 1–18 (MKVSSQLAVAALASFATA), serve as a signal peptide directing secretion. The propeptide occupies 19–180 (ASVDVHKRET…AKALNKRTAI (162 aa)). 2 disulfides stabilise this stretch: Cys-184-Cys-251 and Cys-258-Cys-276. Residue His-301 coordinates Zn(2+). Glu-302 is a catalytic residue. Residues His-305 and Asp-316 each contribute to the Zn(2+) site.

It belongs to the peptidase M35 family. The cofactor is Zn(2+).

The protein localises to the secreted. It catalyses the reaction Preferential cleavage of bonds with hydrophobic residues in P1'. Also 3-Asn-|-Gln-4 and 8-Gly-|-Ser-9 bonds in insulin B chain.. Its function is as follows. Secreted metalloproteinase that allows assimilation of proteinaceous substrates. Shows high activities on basic nuclear substrates such as histone and protamine. The chain is Neutral protease 2 homolog SNOG_10522 from Phaeosphaeria nodorum (strain SN15 / ATCC MYA-4574 / FGSC 10173) (Glume blotch fungus).